The chain runs to 93 residues: Defensin-like protein 210 (93 aa).

A signal peptide spans 1–19; it reads MKTIILFLTLLVISSSCTS. Cystine bridges form between Cys63/Cys80, Cys66/Cys85, and Cys70/Cys87.

It belongs to the DEFL family.

The protein localises to the secreted. The sequence is that of Defensin-like protein 210 from Arabidopsis thaliana (Mouse-ear cress).